A 275-amino-acid polypeptide reads, in one-letter code: Interleukin-2 receptor subunit alpha (275 aa).

Residues 1 to 21 (MEPSLLMWRFFVFIVVPGCVT) form the signal peptide. The region spanning 22 to 81 (EACHDDPPSLRNAMFKVFRYEVGTMINCDCKTGFRRVSAVMRCVGDSSHSAWENRCFCNS) is the Sushi 1 domain. The Extracellular portion of the chain corresponds to 22 to 243 (EACHDDPPSL…DTFIFTTEYQ (222 aa)). Cystine bridges form between Cys24–Cys64, Cys49–Cys77, and Cys51–Cys79. A glycan (N-linked (GlcNAc...) asparagine) is linked at Asn80. A disordered region spans residues 88–130 (QVKQVTPAPEEHREKKHTDAQNQTQPPEEADLPGHCEEPPPWE). Residues 96–106 (PEEHREKKHTD) show a composition bias toward basic and acidic residues. Asn109 carries N-linked (GlcNAc...) asparagine glycosylation. Basic and acidic residues predominate over residues 119-130 (LPGHCEEPPPWE). Residues 121–186 (GHCEEPPPWE…WTRPRLKCIR (66 aa)) form the Sushi 2 domain. Cystine bridges form between Cys123–Cys168 and Cys152–Cys184. A disordered region spans residues 188 to 221 (GEHGQASDDAEPQESTEAPPGSGTFLPTRMAGTT). A helical transmembrane segment spans residues 244–262 (IAVAGCTLLLASILLLSCL). Topologically, residues 263–275 (TWQRKWKKNRRTI) are cytoplasmic.

Non-covalent dimer of an alpha and a beta subunit. IL2R exists in 3 different forms: a high affinity dimer, an intermediate affinity monomer (beta subunit), and a low affinity monomer (alpha subunit). The high and intermediate affinity forms also associate with a gamma subunit.

The protein localises to the membrane. Functionally, receptor for interleukin-2. The receptor is involved in the regulation of immune tolerance by controlling regulatory T cells (TREGs) activity. TREGs suppress the activation and expansion of autoreactive T-cells. The protein is Interleukin-2 receptor subunit alpha (IL2RA) of Bos taurus (Bovine).